The primary structure comprises 187 residues: Lipid A acyltransferase PagP (187 aa).

The first 26 residues, 1 to 26 (MIVAKKYFLVLSFLFVQFALLPQAFS), serve as a signal peptide directing secretion. Active-site residues include H59, D102, and S103.

The protein belongs to the lipid A palmitoyltransferase family. In terms of assembly, homodimer.

Its subcellular location is the cell outer membrane. The enzyme catalyses a lipid A + a 1,2-diacyl-sn-glycero-3-phosphocholine = a hepta-acyl lipid A + a 2-acyl-sn-glycero-3-phosphocholine. It catalyses the reaction a lipid IVA + a 1,2-diacyl-sn-glycero-3-phosphocholine = a lipid IVB + a 2-acyl-sn-glycero-3-phosphocholine. The catalysed reaction is a lipid IIA + a 1,2-diacyl-sn-glycero-3-phosphocholine = a lipid IIB + a 2-acyl-sn-glycero-3-phosphocholine. Transfers a fatty acid residue from the sn-1 position of a phospholipid to the N-linked hydroxyfatty acid chain on the proximal unit of lipid A or its precursors. In Citrobacter koseri (strain ATCC BAA-895 / CDC 4225-83 / SGSC4696), this protein is Lipid A acyltransferase PagP.